The primary structure comprises 284 residues: Protoheme IX farnesyltransferase (284 aa).

A run of 8 helical transmembrane segments spans residues 13–33, 35–55, 87–107, 108–128, 133–153, 162–182, 224–244, and 264–284; these read IIIG…FPFF, VFLF…SCIF, IFAS…VNIL, SMFL…FFLK, YSTF…HTAI, FLLF…IAIL, FLGY…FYWL, and FYYS…DFIF.

Belongs to the UbiA prenyltransferase family. Protoheme IX farnesyltransferase subfamily.

Its subcellular location is the cell membrane. It carries out the reaction heme b + (2E,6E)-farnesyl diphosphate + H2O = Fe(II)-heme o + diphosphate. It participates in porphyrin-containing compound metabolism; heme O biosynthesis; heme O from protoheme: step 1/1. Functionally, converts heme B (protoheme IX) to heme O by substitution of the vinyl group on carbon 2 of heme B porphyrin ring with a hydroxyethyl farnesyl side group. This chain is Protoheme IX farnesyltransferase, found in Buchnera aphidicola subsp. Schizaphis graminum (strain Sg).